The primary structure comprises 1196 residues: uncharacterized protein (1196 aa).

Residues 27–47 form a helical membrane-spanning segment; the sequence is ILLLLGSFILLNVWINVVTLL. Disordered stretches follow at residues 150 to 345, 367 to 402, 669 to 762, 775 to 806, 826 to 877, 960 to 1009, and 1168 to 1196; these read GGGE…PQAH, SSVP…ASAP, TQDS…QKNT, CLTQ…DSGI, QATD…QDSE, YRSS…GPYK, and KCEA…DIRM. Polar residues predominate over residues 157 to 177; sequence VTASKAQASLLSRPETSSQFP. 2 stretches are compositionally biased toward low complexity: residues 212–227 and 253–279; these read HSPT…HPWT and THSQ…TPAH. The span at 299–321 shows a compositional bias: polar residues; the sequence is HTSAQAQTHSPPHTPEYTHSQAH. The segment covering 391–402 has biased composition (pro residues); the sequence is APTPAPVPASAP. Composition is skewed to polar residues over residues 733-742, 750-762, 787-804, and 826-849; these read YLCQNPSPSQ, SGIT…QKNT, PFTQ…TQDS, and QATD…TGNV. Residues 962–971 are compositionally biased toward basic and acidic residues; it reads SSEHSQDSNL.

Its subcellular location is the membrane. This is an uncharacterized protein from Homo sapiens (Human).